Reading from the N-terminus, the 283-residue chain is Cardiolipin synthase (CMP-forming) (283 aa).

The next 3 membrane-spanning stretches (helical) occupy residues 83 to 103, 155 to 175, and 209 to 229; these read PFIGLFIITNNLTPALGLFAF, VSIAAIILGRDVLLAISALFI, and LSKWNTFFQMVYLGSGVLLLL.

It belongs to the CDP-alcohol phosphatidyltransferase class-I family. May be found in a large complex. Mg(2+) serves as cofactor.

It localises to the mitochondrion inner membrane. The catalysed reaction is a CDP-1,2-diacyl-sn-glycerol + a 1,2-diacyl-sn-glycero-3-phospho-(1'-sn-glycerol) = a cardiolipin + CMP + H(+). In terms of biological role, catalyzes the synthesis of cardiolipin (CL) (diphosphatidylglycerol) by specifically transferring a phosphatidyl group from CDP-diacylglycerol to phosphatidylglycerol (PG). CL is a key phospholipid in mitochondrial membranes and plays important roles in maintaining the functional integrity and dynamics of mitochondria under both optimal and stress conditions. The chain is Cardiolipin synthase (CMP-forming) (CRD1) from Saccharomyces cerevisiae (strain ATCC 204508 / S288c) (Baker's yeast).